A 773-amino-acid polypeptide reads, in one-letter code: Leucine-rich repeat and calponin homology domain-containing protein 2 (773 aa).

The disordered stretch occupies residues 1-46; sequence MAASQGGGGNSGGGGCSGGGSGGGGGAAGGGGGGGGGGGGGAGAGG. 9 LRR repeats span residues 97–118, 120–141, 143–164, 166–187, 188–209, 211–232, 234–256, 257–277, and 279–300; these read NSGILSLSGRKLREFPGSGYDL, DTTQADLSRNRFTEIPSDVWLF, PLETLNLYHNCIKTIPEAIKNL, MLTYLNISRNLLSTLPKYLFDL, PLKVLVVSNNKLVSIPEEIGKL, DLMELDVSCNEIQVLPQQMGKL, SLKELNIRRNNLHVLPDELGDLP, LVKLDFSCNKVTEIPVCYRKL, and HLQVIILDNNPLQVPPAQICLK. 3 disordered regions span residues 324–409, 438–478, and 573–633; these read LDLP…QKDQ, FLKG…LKEV, and KYKS…SRQE. Basic and acidic residues-rich tracts occupy residues 386–396 and 440–466; these read SNREQTSRNDS and KGKEKSSEKSQKNEEPPNEKKVDKEQL. Polar residues predominate over residues 594-603; that stretch reads AHMSAQSPVS. The Calponin-homology (CH) domain occupies 650-763; it reads LREEREQIRQ…VTVQALLELP (114 aa).

Functionally, may play a role in the organization of the cytoskeleton. The protein is Leucine-rich repeat and calponin homology domain-containing protein 2 (Lrch2) of Mus musculus (Mouse).